Reading from the N-terminus, the 212-residue chain is MTIHTRIEGMAAPLPVSNLDTDQIMPKQFLRRIDKAGLAEGLLYDMRFGPDGKPRPEFVLNRPEYAAARILVAGPNFGCGSSREHAVWGLMQYGIQAVIAPSFGEIFYSNAMNNSLMLVALAEADVGTILADVSAPENSWITIDVASMTVRSKSLTASFSLSERHRRMFLEGLDMIGATLAMQDQIHAFAARHWQQRPWLKDIASMTKNRLA.

The protein belongs to the LeuD family. LeuD type 1 subfamily. In terms of assembly, heterodimer of LeuC and LeuD.

It carries out the reaction (2R,3S)-3-isopropylmalate = (2S)-2-isopropylmalate. The protein operates within amino-acid biosynthesis; L-leucine biosynthesis; L-leucine from 3-methyl-2-oxobutanoate: step 2/4. Its function is as follows. Catalyzes the isomerization between 2-isopropylmalate and 3-isopropylmalate, via the formation of 2-isopropylmaleate. The chain is 3-isopropylmalate dehydratase small subunit 1 from Chromobacterium violaceum (strain ATCC 12472 / DSM 30191 / JCM 1249 / CCUG 213 / NBRC 12614 / NCIMB 9131 / NCTC 9757 / MK).